We begin with the raw amino-acid sequence, 417 residues long: Carbohydrate sulfotransferase 8 (417 aa).

The Cytoplasmic portion of the chain corresponds to 1–10; the sequence is MTPRLGTMRL. A helical; Signal-anchor for type II membrane protein transmembrane segment spans residues 11–31; the sequence is ACMFSSILLFGAAGLLLFISL. At 32–417 the chain is on the lumenal side; it reads QDPIELSPQQ…NYSKPFSDLY (386 aa). The interval 47–101 is disordered; it reads FSIRPQQPQHDSHLRISTEKGTRDSPSGSPRGLQLQAPDQPRPHPKAAGSPLRLR. The span at 56–69 shows a compositional bias: basic and acidic residues; the sequence is HDSHLRISTEKGTR. N-linked (GlcNAc...) asparagine glycosylation is found at asparagine 121 and asparagine 122. 3'-phosphoadenylyl sulfate contacts are provided by residues 191 to 197 and 251 to 259; these read PKAGCSN and REPFERLVS. N-linked (GlcNAc...) asparagine glycosylation is found at asparagine 287, asparagine 360, and asparagine 408.

This sequence belongs to the sulfotransferase 2 family. As to expression, strongly expressed in brain. Weakly expressed in lung and kidney. Weakly expressed in pituitary.

The protein resides in the golgi apparatus membrane. In terms of biological role, catalyzes the transfer of sulfate to position 4 of non-reducing N-acetylgalactosamine (GalNAc) residues in both N-glycans and O-glycans. Required for biosynthesis of glycoprotein hormones lutropin and thyrotropin, by mediating sulfation of their carbohydrate structures. Only active against terminal GalNAcbeta1,GalNAcbeta. Not active toward chondroitin. This is Carbohydrate sulfotransferase 8 (Chst8) from Mus musculus (Mouse).